Consider the following 884-residue polypeptide: Alanine--tRNA ligase (884 aa).

Residues H562, H566, C676, and H680 each coordinate Zn(2+).

This sequence belongs to the class-II aminoacyl-tRNA synthetase family. The cofactor is Zn(2+).

The protein localises to the cytoplasm. The enzyme catalyses tRNA(Ala) + L-alanine + ATP = L-alanyl-tRNA(Ala) + AMP + diphosphate. Functionally, catalyzes the attachment of alanine to tRNA(Ala) in a two-step reaction: alanine is first activated by ATP to form Ala-AMP and then transferred to the acceptor end of tRNA(Ala). Also edits incorrectly charged Ser-tRNA(Ala) and Gly-tRNA(Ala) via its editing domain. The sequence is that of Alanine--tRNA ligase from Jannaschia sp. (strain CCS1).